Consider the following 147-residue polypeptide: Hemoglobin subunit gamma (147 aa).

The Globin domain maps to 3-147 (YFTAEEKAAI…VASALARKYH (145 aa)). 2 residues coordinate heme b: His64 and His93.

This sequence belongs to the globin family. Heterotetramer of two alpha chains and two gamma chains in fetal hemoglobin (Hb F). In terms of tissue distribution, red blood cells.

Gamma chains make up the fetal hemoglobin F, in combination with alpha chains. In Dugong dugon (Dugong), this protein is Hemoglobin subunit gamma (HBG).